The sequence spans 512 residues: MNVTALNLIPGQLSLAQLRAIYQQPVTLRLDDSATAQIEASVACVEQILAENRTAYGINTGFGLLASTRIASEDLENLQRSLVLSHAAGVGEPISDALVRLVMVLKVNSLSRGFSGIRRQVIDALIALINAEVYPHIPLKGSVGASGDLAPLAHMSLVLLGEGKARYKGEWLEATEALKVAGLTPLTLAAKEGLALLNGTQVSTAYALRGLFEGEDLFAGALACGGLTVEAVLGSRSPFDARIHAARGQRGQIDSAAAYRDLLGESSQVSQSHQNCDKVQDPYSLRCQPQVMGACLTQFRQAAEVLVVEANAVSDNPLVFAAEGDVISGGNFHAEPVAMAADNMALAIAEIGSLSERRISLMMDKHMSQLPPFLVGNGGVNSGFMIAQVTAAALASENKALAHPHSVDSLPTSANQEDHVSMAPAAGKRLWEMAENTRGILAVEWLAACQGLDLREGLKTSPKLEKARGILRDKVAFYDKDRFFAPDINAASELLATRCLNELVPANLLPSL.

The 5-imidazolinone (Ala-Gly) cross-link spans 145–147 (ASG). S146 carries the post-translational modification 2,3-didehydroalanine (Ser).

This sequence belongs to the PAL/histidase family. Post-translationally, contains an active site 4-methylidene-imidazol-5-one (MIO), which is formed autocatalytically by cyclization and dehydration of residues Ala-Ser-Gly.

The protein resides in the cytoplasm. The enzyme catalyses L-histidine = trans-urocanate + NH4(+). It functions in the pathway amino-acid degradation; L-histidine degradation into L-glutamate; N-formimidoyl-L-glutamate from L-histidine: step 1/3. This is Histidine ammonia-lyase from Pseudomonas fluorescens (strain SBW25).